We begin with the raw amino-acid sequence, 136 residues long: Holo-[acyl-carrier-protein] synthase (136 aa).

Positions 8 and 57 each coordinate Mg(2+).

The protein belongs to the P-Pant transferase superfamily. AcpS family. Mg(2+) is required as a cofactor.

It is found in the cytoplasm. The enzyme catalyses apo-[ACP] + CoA = holo-[ACP] + adenosine 3',5'-bisphosphate + H(+). Transfers the 4'-phosphopantetheine moiety from coenzyme A to a Ser of acyl-carrier-protein. This Methylorubrum extorquens (strain CM4 / NCIMB 13688) (Methylobacterium extorquens) protein is Holo-[acyl-carrier-protein] synthase.